We begin with the raw amino-acid sequence, 406 residues long: Zinc finger protein 57 (406 aa).

The 72-residue stretch at 17 to 88 folds into the KRAB domain; the sequence is VRYEDVAVSF…TCTGVFKGGP (72 aa). The segment at 57 to 77 is disordered; sequence ESKKKPQEPNPNLKDKDDDKS. The C2H2-type 1; degenerate zinc-finger motif lies at 90–113; that stretch reads FFCLTCGKCFKKNTFLFNHQFPVR. C2H2-type zinc fingers lie at residues 140 to 162 and 168 to 190; these read FFCNLCGKTYRDASGLSRHRRAH and RSCPECGKCFRDQSEVNRHLKVH. The disordered stretch occupies residues 194-226; the sequence is KPVAGSHVKVHQNKPVASNQKQKGRVPPTTRES. The C2H2-type 4 zinc finger occupies 270–292; it reads VYCPYCRITFTMRTCLLNHLKIH. The segment at 318 to 337 adopts a C2H2-type 5; degenerate zinc-finger fold; that stretch reads YNCPVCDSSFRGKESLLNHL. Positions 372–406 are disordered; the sequence is SRKRRRKRISSDSSETEGPSGSDEVMEVDTDSDLS. The segment covering 395–406 has biased composition (acidic residues); it reads EVMEVDTDSDLS.

The protein belongs to the krueppel C2H2-type zinc-finger protein family. In terms of tissue distribution, expressed in oligodendrocytes and at lower levels in astrocytes.

It localises to the nucleus. Transcription regulator required to maintain maternal and paternal gene imprinting, a process by which gene expression is restricted in a parent of origin-specific manner by epigenetic modification of genomic DNA and chromatin, including DNA methylation. Acts by controlling DNA methylation during the earliest multicellular stages of development at multiple imprinting control regions (ICRs). Acts together with ZNF445. Required for the establishment of maternal methylation imprints at SNRPN locus. Acts as a transcriptional repressor in Schwann cells. Binds to a 5'-TGCCGC-3' consensus sequence and recognizes the methylated CpG within this element. The chain is Zinc finger protein 57 (Zfp57) from Rattus norvegicus (Rat).